A 486-amino-acid chain; its full sequence is Malonate-semialdehyde dehydrogenase 2 (486 aa).

Phenylalanine 154, lysine 178, glutamate 181, arginine 182, and serine 231 together coordinate NAD(+). The active-site Nucleophile is cysteine 286. Glutamate 385 contributes to the NAD(+) binding site.

It belongs to the aldehyde dehydrogenase family. IolA subfamily. In terms of assembly, homotetramer.

It carries out the reaction 3-oxopropanoate + NAD(+) + CoA + H2O = hydrogencarbonate + acetyl-CoA + NADH + H(+). The enzyme catalyses 2-methyl-3-oxopropanoate + NAD(+) + CoA + H2O = propanoyl-CoA + hydrogencarbonate + NADH + H(+). It participates in polyol metabolism; myo-inositol degradation into acetyl-CoA; acetyl-CoA from myo-inositol: step 7/7. In terms of biological role, catalyzes the oxidation of malonate semialdehyde (MSA) and methylmalonate semialdehyde (MMSA) into acetyl-CoA and propanoyl-CoA, respectively. Is involved in a myo-inositol catabolic pathway. Bicarbonate, and not CO2, is the end-product of the enzymatic reaction. This is Malonate-semialdehyde dehydrogenase 2 from Shouchella clausii (strain KSM-K16) (Alkalihalobacillus clausii).